Consider the following 378-residue polypeptide: Polygalacturonase (378 aa).

An N-terminal signal peptide occupies residues 1-20; sequence MILTRSVVLGFLGSASLALA. The cysteines at positions 39 and 57 are disulfide-linked. 5 PbH1 repeats span residues 172 to 203, 204 to 225, 226 to 246, 255 to 276, and 284 to 306; these read SSGL…DIGD, SDSI…AINS, GTNI…SIGS, VETV…RVKA, and IKGV…TIRQ. Residue Asp-218 is the Proton donor of the active site. An intrachain disulfide couples Cys-220 to Cys-236. The active site involves His-240. Cystine bridges form between Cys-346/Cys-352 and Cys-370/Cys-378.

It belongs to the glycosyl hydrolase 28 family.

Its subcellular location is the secreted. It catalyses the reaction (1,4-alpha-D-galacturonosyl)n+m + H2O = (1,4-alpha-D-galacturonosyl)n + (1,4-alpha-D-galacturonosyl)m.. The chain is Polygalacturonase (PEPG1) from Penicillium expansum (Blue mold rot fungus).